Here is a 246-residue protein sequence, read N- to C-terminus: tRNA (guanine-N(7)-)-methyltransferase (246 aa).

The S-adenosyl-L-methionine site is built by glutamate 76, glutamate 101, aspartate 128, and aspartate 151. The active site involves aspartate 151. Lysine 155 contributes to the substrate binding site. Residues 157-162 (RHNKRR) form an interaction with RNA region. Substrate-binding positions include aspartate 187 and 222–225 (TKFE).

This sequence belongs to the class I-like SAM-binding methyltransferase superfamily. TrmB family.

The enzyme catalyses guanosine(46) in tRNA + S-adenosyl-L-methionine = N(7)-methylguanosine(46) in tRNA + S-adenosyl-L-homocysteine. The protein operates within tRNA modification; N(7)-methylguanine-tRNA biosynthesis. In terms of biological role, catalyzes the formation of N(7)-methylguanine at position 46 (m7G46) in tRNA. This chain is tRNA (guanine-N(7)-)-methyltransferase, found in Dechloromonas aromatica (strain RCB).